A 332-amino-acid chain; its full sequence is Transaldolase (332 aa).

Catalysis depends on lysine 135, which acts as the Schiff-base intermediate with substrate.

This sequence belongs to the transaldolase family. Type 1 subfamily. In terms of assembly, homodimer.

The protein localises to the cytoplasm. The enzyme catalyses D-sedoheptulose 7-phosphate + D-glyceraldehyde 3-phosphate = D-erythrose 4-phosphate + beta-D-fructose 6-phosphate. It participates in carbohydrate degradation; pentose phosphate pathway; D-glyceraldehyde 3-phosphate and beta-D-fructose 6-phosphate from D-ribose 5-phosphate and D-xylulose 5-phosphate (non-oxidative stage): step 2/3. Functionally, transaldolase is important for the balance of metabolites in the pentose-phosphate pathway. This chain is Transaldolase, found in Prochlorococcus marinus (strain NATL1A).